Here is a 191-residue protein sequence, read N- to C-terminus: dTTP/UTP pyrophosphatase (191 aa).

Residue D65 is the Proton acceptor of the active site.

The protein belongs to the Maf family. YhdE subfamily. The cofactor is a divalent metal cation.

The protein localises to the cytoplasm. The catalysed reaction is dTTP + H2O = dTMP + diphosphate + H(+). It catalyses the reaction UTP + H2O = UMP + diphosphate + H(+). Functionally, nucleoside triphosphate pyrophosphatase that hydrolyzes dTTP and UTP. May have a dual role in cell division arrest and in preventing the incorporation of modified nucleotides into cellular nucleic acids. The chain is dTTP/UTP pyrophosphatase from Leptospira biflexa serovar Patoc (strain Patoc 1 / Ames).